Reading from the N-terminus, the 347-residue chain is NADH-quinone oxidoreductase subunit H (347 aa).

8 helical membrane-spanning segments follow: residues 21 to 41 (IAGI…IIYA), 87 to 107 (GLFL…WAVI), 120 to 140 (VGLL…VIAG), 160 to 180 (ISYE…AGTF), 194 to 214 (WIIN…MFLI), 259 to 279 (LLMC…PLDI), 282 to 302 (LYLV…FFIF), and 324 to 344 (VFLP…MATG).

Belongs to the complex I subunit 1 family. In terms of assembly, NDH-1 is composed of 14 different subunits. Subunits NuoA, H, J, K, L, M, N constitute the membrane sector of the complex.

The protein resides in the cell inner membrane. It carries out the reaction a quinone + NADH + 5 H(+)(in) = a quinol + NAD(+) + 4 H(+)(out). Functionally, NDH-1 shuttles electrons from NADH, via FMN and iron-sulfur (Fe-S) centers, to quinones in the respiratory chain. The immediate electron acceptor for the enzyme in this species is believed to be ubiquinone. Couples the redox reaction to proton translocation (for every two electrons transferred, four hydrogen ions are translocated across the cytoplasmic membrane), and thus conserves the redox energy in a proton gradient. This subunit may bind ubiquinone. This chain is NADH-quinone oxidoreductase subunit H, found in Novosphingobium aromaticivorans (strain ATCC 700278 / DSM 12444 / CCUG 56034 / CIP 105152 / NBRC 16084 / F199).